Consider the following 96-residue polypeptide: Aspartyl/glutamyl-tRNA(Asn/Gln) amidotransferase subunit C (96 aa).

The protein belongs to the GatC family. Heterotrimer of A, B and C subunits.

It catalyses the reaction L-glutamyl-tRNA(Gln) + L-glutamine + ATP + H2O = L-glutaminyl-tRNA(Gln) + L-glutamate + ADP + phosphate + H(+). The catalysed reaction is L-aspartyl-tRNA(Asn) + L-glutamine + ATP + H2O = L-asparaginyl-tRNA(Asn) + L-glutamate + ADP + phosphate + 2 H(+). In terms of biological role, allows the formation of correctly charged Asn-tRNA(Asn) or Gln-tRNA(Gln) through the transamidation of misacylated Asp-tRNA(Asn) or Glu-tRNA(Gln) in organisms which lack either or both of asparaginyl-tRNA or glutaminyl-tRNA synthetases. The reaction takes place in the presence of glutamine and ATP through an activated phospho-Asp-tRNA(Asn) or phospho-Glu-tRNA(Gln). The sequence is that of Aspartyl/glutamyl-tRNA(Asn/Gln) amidotransferase subunit C from Leptospira interrogans serogroup Icterohaemorrhagiae serovar copenhageni (strain Fiocruz L1-130).